A 320-amino-acid chain; its full sequence is Cytochrome f (320 aa).

Residues 1–35 form the signal peptide; sequence MQTRNAFSWIKKEITRSISVLLMIYIITRAPISNA. Residues tyrosine 36, cysteine 56, cysteine 59, and histidine 60 each contribute to the heme site. The helical transmembrane segment at 286–305 threads the bilayer; sequence VQGLLLFLASIILAQIFLVL.

Belongs to the cytochrome f family. As to quaternary structure, the 4 large subunits of the cytochrome b6-f complex are cytochrome b6, subunit IV (17 kDa polypeptide, petD), cytochrome f and the Rieske protein, while the 4 small subunits are PetG, PetL, PetM and PetN. The complex functions as a dimer. Heme is required as a cofactor.

It localises to the plastid. Its subcellular location is the chloroplast thylakoid membrane. Its function is as follows. Component of the cytochrome b6-f complex, which mediates electron transfer between photosystem II (PSII) and photosystem I (PSI), cyclic electron flow around PSI, and state transitions. The chain is Cytochrome f (petA) from Vicia faba (Broad bean).